Reading from the N-terminus, the 335-residue chain is MSLAPSSYPSLYSSPSLPRTQQTKQNPSLITQSSFISAKSLFLSSNSASLCNTHVAKRRNLALKASETESSAKAEAGGDGEEEEKYETYEIEVEQPYGLKFRKGRDGGTYIDAILPGGSADKTGKFTVGDRVIATSAVFGTEIWPAAEYGRTMYTIRQRIGPLLMQMEKRNGKAEDTGELTEKEIIRAERNAGYISSRLREIQMQNYLKKKEQKAQREKDLREGLQFSKNGKYEEALERFESVLGSKPTPEEASVASYNVACCYSKLNQVQAGLSALEEALKSGYEDFKRIRSDPDLETLRKSKDFDPLLKQFDESFINESAINAIKSLFGFNKK.

The segment covering 1 to 18 (MSLAPSSYPSLYSSPSLP) has biased composition (low complexity). Disordered stretches follow at residues 1-29 (MSLA…NPSL) and 66-88 (SETE…KYET). Residues 1–73 (MSLAPSSYPS…KASETESSAK (73 aa)) constitute a chloroplast transit peptide. Positions 19–29 (RTQQTKQNPSL) are enriched in polar residues. Acidic residues predominate over residues 78–88 (GDGEEEEKYET). The 40-residue stretch at 97–136 (YGLKFRKGRDGGTYIDAILPGGSADKTGKFTVGDRVIATS) folds into the PDZ domain. TPR repeat units follow at residues 217-250 (REKD…KPTP), 254-287 (SVAS…GYED), and 289-323 (KRIR…ESAI).

Interacts directly with stromal loops of photosystem II (PSII) core components psbB (CP47) and psbC (CP43). Associates with PSII subcomplexes formed during the PSII repair cycle (e.g. PSII dimers, PSII monomers, CP43-less PSII monomerand PSII reaction centers). Phosphorylated rapidly (e.g. within 5 minutes) but transiently at threonine and serine residues after wounding. Expressed in leaves (at protein level). Mostly expressed in leaves, stems and siliques, and, to a lower extent, in flowers and senescent leaves, but not present in roots (at protein level).

The protein resides in the plastid. Its subcellular location is the chloroplast membrane. The protein localises to the chloroplast thylakoid membrane. In terms of biological role, involved in photosystem II supercomplex formation and repair, probably acting as a psbB/psbC chaperone on the stromal side of the membrane. In Arabidopsis thaliana (Mouse-ear cress), this protein is Protein MET1, chloroplastic.